The following is a 385-amino-acid chain: MAELRQIPGGRETPQGELRPEVVEDEVPRSPVAEEPGGGGSNSSEAKLSPREEEELDPRIQEELEHLNQASEEINQVELQLDEARTTYRRILQESARKLNTQGSHLGSCIEKARPYYEARRLAKEAQQETQKAALRYERAVSMHNAAREMVFVAEQGVMADKNRLDPTWQEMLNHATCKVNEAEEERLRGEREHQRVTRLCQQAEARVQALQKTLRRAIGKSRPYFELKAQFSQILEEHKAKVTELEQQVAQAKTRYSVALRNLEQISEQIHARRRGQPAHTPGQRRSSPVGAEAGPDGGEDADSGIIEGAEGGGLEEGVSLGPGAAPDTDTLSLLSLRTVASDLQKCDSVEHLRGLSDHTSLDGQELGPRSGGRGGRHQRSISL.

The interval 1–58 is disordered; sequence MAELRQIPGGRETPQGELRPEVVEDEVPRSPVAEEPGGGGSNSSEAKLSPREEEELDP. Thr13 bears the Phosphothreonine mark. Residues 18–28 are compositionally biased toward basic and acidic residues; it reads LRPEVVEDEVP. Phosphoserine is present on residues Ser30 and Ser49. 2 coiled-coil regions span residues 59–140 and 169–272; these read RIQE…YERA and WQEM…EQIH. Positions 272 to 328 are disordered; the sequence is HARRRGQPAHTPGQRRSSPVGAEAGPDGGEDADSGIIEGAEGGGLEEGVSLGPGAAP. Over residues 318–328 the composition is skewed to low complexity; sequence EGVSLGPGAAP. A phosphoserine mark is found at Ser343, Ser350, Ser358, and Ser362. The tract at residues 359 to 385 is disordered; the sequence is DHTSLDGQELGPRSGGRGGRHQRSISL. The span at 376–385 shows a compositional bias: basic residues; that stretch reads GGRHQRSISL.

The protein belongs to the SH3BP5 family.

Functionally, functions as a guanine nucleotide exchange factor (GEF) for RAB11A. In Bos taurus (Bovine), this protein is SH3 domain-binding protein 5-like (SH3BP5L).